The following is a 243-amino-acid chain: Cytochrome c oxidase subunit 2 (243 aa).

Topologically, residues Met1–Gln34 are mitochondrial intermembrane. A helical transmembrane segment spans residues Val35–Leu55. Residues Arg56–Glu74 lie on the Mitochondrial matrix side of the membrane. A helical membrane pass occupies residues Phe75–Tyr97. The Mitochondrial intermembrane portion of the chain corresponds to Leu98–Gln243. Positions 178, 213, 215, 217, 221, and 224 each coordinate Cu cation. A Mg(2+)-binding site is contributed by Glu215.

Belongs to the cytochrome c oxidase subunit 2 family. Component of the cytochrome c oxidase (complex IV, CIV), a multisubunit enzyme composed of a catalytic core of 3 subunits and several supernumerary subunits. The complex exists as a monomer or a dimer and forms supercomplexes (SCs) in the inner mitochondrial membrane with ubiquinol-cytochrome c oxidoreductase (cytochrome b-c1 complex, complex III, CIII). Requires Cu cation as cofactor.

It localises to the mitochondrion inner membrane. It carries out the reaction 4 Fe(II)-[cytochrome c] + O2 + 8 H(+)(in) = 4 Fe(III)-[cytochrome c] + 2 H2O + 4 H(+)(out). Its function is as follows. Component of the cytochrome c oxidase, the last enzyme in the mitochondrial electron transport chain which drives oxidative phosphorylation. The respiratory chain contains 3 multisubunit complexes succinate dehydrogenase (complex II, CII), ubiquinol-cytochrome c oxidoreductase (cytochrome b-c1 complex, complex III, CIII) and cytochrome c oxidase (complex IV, CIV), that cooperate to transfer electrons derived from NADH and succinate to molecular oxygen, creating an electrochemical gradient over the inner membrane that drives transmembrane transport and the ATP synthase. Cytochrome c oxidase is the component of the respiratory chain that catalyzes the reduction of oxygen to water. Electrons originating from reduced cytochrome c in the intermembrane space (IMS) are transferred via the dinuclear copper A center (CU(A)) of subunit 2 and heme A of subunit 1 to the active site in subunit 1, a binuclear center (BNC) formed by heme A3 and copper B (CU(B)). The BNC reduces molecular oxygen to 2 water molecules using 4 electrons from cytochrome c in the IMS and 4 protons from the mitochondrial matrix. This is Cytochrome c oxidase subunit 2 from Pneumocystis carinii.